Consider the following 264-residue polypeptide: Secretory carrier-associated membrane protein 4 (264 aa).

The segment at 1-33 (MNRHHDPNPFDEDEEIVNPFSKGGGRVPAASRP) is disordered. Over 1 to 122 (MNRHHDPNPF…AQKLQYLAFA (122 aa)) the chain is Cytoplasmic. The stretch at 51–85 (MNDSSQKQRKLADWEAELRKKEMDIKRREEAIAKF) forms a coiled coil. The next 4 helical transmembrane spans lie at 123–143 (SWLG…VCWI), 150–170 (IFFL…VLWY), 185–205 (FGWF…AAIA), and 233–253 (IFYF…LWVL). The Cytoplasmic portion of the chain corresponds to 254-264 (QKIYLYFRGNK).

The protein belongs to the SCAMP family.

It localises to the cell membrane. The protein localises to the cytoplasmic vesicle. The protein resides in the secretory vesicle membrane. In terms of biological role, probably involved in membrane trafficking. In Arabidopsis thaliana (Mouse-ear cress), this protein is Secretory carrier-associated membrane protein 4 (SCAMP4).